A 90-amino-acid polypeptide reads, in one-letter code: Small ribosomal subunit protein bS20 (90 aa).

The interval 1-21 is disordered; sequence MANHKSALKRVRQTKKRTERN.

This sequence belongs to the bacterial ribosomal protein bS20 family.

Its function is as follows. Binds directly to 16S ribosomal RNA. This chain is Small ribosomal subunit protein bS20, found in Nitratiruptor sp. (strain SB155-2).